A 142-amino-acid polypeptide reads, in one-letter code: Glia maturation factor beta (142 aa).

Ser-2 carries the N-acetylserine modification. One can recognise an ADF-H domain in the interval 4–139 (SLVVCDVAED…TEEWLREKLG (136 aa)).

This sequence belongs to the actin-binding proteins ADF family. GMF subfamily. Phosphorylated; stimulated by phorbol ester.

Functionally, this protein causes differentiation of brain cells, stimulation of neural regeneration, and inhibition of proliferation of tumor cells. This chain is Glia maturation factor beta (Gmfb), found in Rattus norvegicus (Rat).